The chain runs to 129 residues: Small ribosomal subunit protein uS9 (129 aa).

It belongs to the universal ribosomal protein uS9 family.

This Treponema pallidum (strain Nichols) protein is Small ribosomal subunit protein uS9 (rpsI).